The following is a 344-amino-acid chain: Ion-translocating oxidoreductase complex subunit D (344 aa).

4 helical membrane passes run 23–43 (LVLGACVPGLLTLTWLYGPGT), 44–64 (LLNLAWASLVALACEAAMLAL), 77–99 (SALVTALLLAVALPPYAPWWLTL), and 120–140 (PFNPAMLGYVVALVSFPLEMT). Threonine 172 is subject to FMN phosphoryl threonine. 5 consecutive transmembrane segments (helical) span residues 198 to 218 (LGSAGSEWVNLAFLLGGLFLL), 222 to 242 (LFTWHAPLGMLAGLFAMSLLF), 252 to 272 (GSPLFHLFSGATMLGAFFIVT), 285 to 305 (LVFGLGVGVLTYVIRAWGGYP), and 306 to 326 (DGMAFAVLLMNLAAPTIDYYT).

The protein belongs to the NqrB/RnfD family. In terms of assembly, the complex is composed of six subunits: RnfA, RnfB, RnfC, RnfD, RnfE and RnfG. It depends on FMN as a cofactor.

The protein localises to the cell inner membrane. Part of a membrane-bound complex that couples electron transfer with translocation of ions across the membrane. The protein is Ion-translocating oxidoreductase complex subunit D of Pseudomonas aeruginosa (strain LESB58).